The primary structure comprises 122 residues: ATP-dependent Clp protease adapter protein ClpS (122 aa).

A disordered region spans residues 1–33 (MHAPSQIRLTFNQDHPEPHEHEDEGAGLAVQES). A compositionally biased stretch (basic and acidic residues) spans 14 to 24 (DHPEPHEHEDE).

The protein belongs to the ClpS family. In terms of assembly, binds to the N-terminal domain of the chaperone ClpA.

Involved in the modulation of the specificity of the ClpAP-mediated ATP-dependent protein degradation. In Pseudomonas aeruginosa (strain ATCC 15692 / DSM 22644 / CIP 104116 / JCM 14847 / LMG 12228 / 1C / PRS 101 / PAO1), this protein is ATP-dependent Clp protease adapter protein ClpS.